The chain runs to 610 residues: Zinc metalloproteinase-disintegrin-like brevilysin H6 (610 aa).

An N-terminal signal peptide occupies residues 1 to 20; sequence MIQVLLVTICLAAFPYQGSS. Positions 21 to 191 are excised as a propeptide; it reads IILESGNVND…ASQLNLTPEQ (171 aa). A Pyrrolidone carboxylic acid modification is found at Q192. Residues 198 to 394 form the Peptidase M12B domain; sequence RFVELVLVAD…HNPECIVNEP (197 aa). Positions 201 and 285 each coordinate Ca(2+). 4 disulfide bridges follow: C309/C389, C349/C373, C351/C356, and C373/C378. H334 contacts Zn(2+). The active site involves E335. Zn(2+)-binding residues include H338 and H344. N372 carries N-linked (GlcNAc...) asparagine glycosylation. Ca(2+) contacts are provided by C389, N392, V404, N407, L409, E411, E414, and D417. A Disintegrin domain is found at 402–488; that stretch reads PPVCGNELLE…ECPADVFHKN (87 aa). Disulfide bonds link C405–C424, C405–C434, C416–C429, C416–C434, C418–C424, C428–C451, C442–C448, C447–C473, C460–C480, C467–C492, C467–C499, C492–C504, C499–C504, C511–C526, C511–C561, C526–C572, C539–C549, C549–C556, C556–C598, C561–C572, C592–C603, and C598–C603. The D/ECD-tripeptide signature appears at 466–468; it reads ECD. 5 residues coordinate Ca(2+): D468, P469, E471, D483, and V484.

It belongs to the venom metalloproteinase (M12B) family. P-III subfamily. P-IIIb sub-subfamily. Monomer. The cofactor is Zn(2+). Post-translationally, in the absence of calcium ions, is autocatalytically degraded giving 29 (p29K) and 45 kDa (p45K) fragments. In presence of calcium ions, the p45K is not detected. Expressed by the venom gland.

It is found in the secreted. Its activity is regulated as follows. Inhibited by chelating agents. Calcium ions enhance its activity, they also suppress autoproteolysis, and contribute to the stability of the enzyme against pH, heating, urea and cysteine. In terms of biological role, shows weak hemorrhagic activity. Rapidly degrades the alpha-chain of fibrinogen (FGA). The polypeptide is Zinc metalloproteinase-disintegrin-like brevilysin H6 (Gloydius brevicauda (Korean slamosa snake)).